Here is a 39-residue protein sequence, read N- to C-terminus: Photosystem I reaction center subunit IX (39 aa).

A helical transmembrane segment spans residues 7-27 (FLTTAPVAFILFSSFVFALFI).

The protein belongs to the PsaJ family.

The protein resides in the cellular thylakoid membrane. Its function is as follows. May help in the organization of the PsaE and PsaF subunits. The chain is Photosystem I reaction center subunit IX from Synechococcus sp. (strain JA-2-3B'a(2-13)) (Cyanobacteria bacterium Yellowstone B-Prime).